A 273-amino-acid polypeptide reads, in one-letter code: Signal recognition particle subunit SEC65 (273 aa).

The segment at 25-71 (PSLRTPIAPKITPKVVRSQDQENPAFLPGTNNNSNSNNNSSNEKEQL) is disordered. The segment covering 55–65 (NNNSNSNNNSS) has biased composition (low complexity).

Fungal signal recognition particle (SRP) complex consists of a 7S RNA molecule (scR1) and at least six protein subunits: SRP72, SRP68, SRP54, SEC65, SRP21 and SRP14.

It localises to the cytoplasm. In terms of biological role, signal-recognition-particle (SRP) assembly has a crucial role in targeting secretory proteins to the rough endoplasmic reticulum (ER) membrane. SRP is required for the cotranslational protein translocation for ER import and preferentially recognizes strongly hydrophobic signal sequences. It is involved in targeting the nascent chain-ribosome (RNC) complex to the ER and is proposed to participate in the arrest of nascent chain elongation during membrane targeting. SEC65 is required for SRP integrity. This chain is Signal recognition particle subunit SEC65 (SEC65), found in Saccharomyces cerevisiae (strain ATCC 204508 / S288c) (Baker's yeast).